The primary structure comprises 140 residues: Actin-depolymerizing factor 8 (140 aa).

Residue Ser-6 is modified to Phosphoserine. The 133-residue stretch at 7–139 (GMHVNDECKI…SLDIIKGRLN (133 aa)) folds into the ADF-H domain.

Belongs to the actin-binding proteins ADF family. In terms of tissue distribution, expressed in the root trichoblast cells and developed root hairs.

The protein localises to the cytoplasm. Its subcellular location is the cytoskeleton. Functionally, actin-depolymerizing protein. Severs actin filaments (F-actin) and binds to actin monomers. The chain is Actin-depolymerizing factor 8 (ADF8) from Arabidopsis thaliana (Mouse-ear cress).